The sequence spans 534 residues: MKTKFLFITGGVVSSLGKGLAAASIGALMEARGLRVSMQKMDPYINVDPGTMSPFQHGEVFVTDDGAETDLDLGHYERYTSARLSQKSNFTTGQVYDSVIRKERRGDYLGGTVQVIPHITNEIKAKILANSKDVDVAIVEVGGTVGDIESLPFLEAIRQFRVERGRENVLYLHLTLVPYIPTAGELKTKPTQHSVKELREIGIQPDILLCRCDREIPRDMKAKIALFCNVSEEAVVTARDVECIYEVPIAYHEEGLDERIIDYLNIWTKAPDLTDWERIVRRFKEPESETTIAIVGKYVELTESYKSLSEALIHGGIANNCRVNLIYVDSESLERHGVGDTFKDVDGILVPGGFGHRGSEGKIAAIRYARENRIPFFGICLGMQMAVVEFARNVCGIDDCFSSEFKEDAANPVIHIMENQKKVTRKGGTMRLGAYPCQLVEGTLARRIFGTGDVEERHRHRYEFNNAYQERLEKGGLVISGVYRDVGLVEIVEIEDHPWFLGCQFHPEFRSRPMEPHPLFESFVGASLKHHGEA.

The amidoligase domain stretch occupies residues 1–266; it reads MKTKFLFITG…DERIIDYLNI (266 aa). Ser14 lines the CTP pocket. UTP is bound at residue Ser14. ATP-binding positions include 15 to 20 and Asp72; that span reads SLGKGL. The Mg(2+) site is built by Asp72 and Glu140. CTP contacts are provided by residues 147-149, 187-192, and Lys223; these read DIE and KTKPTQ. UTP is bound by residues 187-192 and Lys223; that span reads KTKPTQ. 239–241 contributes to the ATP binding site; it reads RDV. The Glutamine amidotransferase type-1 domain occupies 291–533; it reads TIAIVGKYVE…VGASLKHHGE (243 aa). Gly353 contacts L-glutamine. Cys380 (nucleophile; for glutamine hydrolysis) is an active-site residue. L-glutamine is bound by residues 381-384, Glu404, and Arg461; that span reads LGMQ. Catalysis depends on residues His506 and Glu508.

This sequence belongs to the CTP synthase family. In terms of assembly, homotetramer.

The enzyme catalyses UTP + L-glutamine + ATP + H2O = CTP + L-glutamate + ADP + phosphate + 2 H(+). It catalyses the reaction L-glutamine + H2O = L-glutamate + NH4(+). The catalysed reaction is UTP + NH4(+) + ATP = CTP + ADP + phosphate + 2 H(+). It functions in the pathway pyrimidine metabolism; CTP biosynthesis via de novo pathway; CTP from UDP: step 2/2. Its activity is regulated as follows. Allosterically activated by GTP, when glutamine is the substrate; GTP has no effect on the reaction when ammonia is the substrate. The allosteric effector GTP functions by stabilizing the protein conformation that binds the tetrahedral intermediate(s) formed during glutamine hydrolysis. Inhibited by the product CTP, via allosteric rather than competitive inhibition. In terms of biological role, catalyzes the ATP-dependent amination of UTP to CTP with either L-glutamine or ammonia as the source of nitrogen. Regulates intracellular CTP levels through interactions with the four ribonucleotide triphosphates. This chain is CTP synthase, found in Syntrophotalea carbinolica (strain DSM 2380 / NBRC 103641 / GraBd1) (Pelobacter carbinolicus).